Here is a 245-residue protein sequence, read N- to C-terminus: DNA repair protein RecO (245 aa).

It belongs to the RecO family.

In terms of biological role, involved in DNA repair and RecF pathway recombination. This chain is DNA repair protein RecO, found in Erwinia tasmaniensis (strain DSM 17950 / CFBP 7177 / CIP 109463 / NCPPB 4357 / Et1/99).